Reading from the N-terminus, the 1222-residue chain is MSDPLKMAAETEEIKPVPAAMGEKKDVVLCKKIVETLGGGGDQRVLLVGEAGIGKTRMAQMVDKEASKDVLCYQTLWLHLNRKFKVNDNYIKEKKFEDEWSLYENIASQLSLYSDFEETEVGERDEDEEEEKKVEDLLKDLKPKIEKYLLEKKEAVVKKLEDDKKKKEKEAAEKLEAEKKLVDPAAKKAKDHGNKNPTDAAKEKTTQVVAGGEDKAQTSSERKPYLLLILDDEGMTSEYEVMVHLGLEDFLKDHTPRKILITRRQETEEATKSGEHAEGEANDSQSGEKKEDTDGEDEIRSADKEEPESQARVKTEEKHEKVVPPTIDDLWGSTNTYGEITFQTTNESQDLLESFNLKEAEALFTSSMFFKDMPNFFFDPVPGTDEKLLNHMLKKSKSLPAAINVLAKSLEYTVKSKSYKLNKDEEERLLKEKIEMVLSAERGNPSDQESSSESPKKASGENPILLLAYKLFKTDGPLKDTILDCFWHSLDFFEHCGCVYYRDLITQWILEGYFDPVRSVEKAYQDGHSIFMELIDRGMLKIQENNVVVPEMAMRNVIDPRRGGHLGKSRLGFSRVYGGNKRKGIGKITQLDDMIKTVQAKKGDKITTILVSGDRLRRVTPKKFFKNLKELEVLGLFEPTVKPFVPSFSDQLKLLRVLIIRDCDLLKSIEELKALTKLNTLEVSGASSLSKISEKFFESFPELRSLHLSGLKIESSPPSISGLKELHCLIIKDCPLLQDLPNIQELVNLEVVDVSGASGLRTCFDNADGAKKNKSKNKNFYLLTKLQHLDFSGSQIERLPIFQDSAVAAKLHSLTRLLLRNCSKLRRLPSLKPLSGLQILDLSGTTSLVEMLEVCFEDKLELKTLNLSGTNLSELATTIEDLSSLNELLLRDCINLDAIPNIEKLENLEVIDVSGSAKLAKIEGSFEKMFYLRVVDLSGTQVETPELPADTKIHCLKRFTRADGKCFERDTWREIKEDIERDRSENASSSDAVVISQEITEKKPVEIREVESNAPRASDCTEKVDVNKERLLKVPIDRALYQKALTSLVDSKIPQEEVLEINETNKLDEEALASAEFVSFVDCTPERVKSIFEKAKLVKGCWLRMCFDIKDPFDGVDEENLKSLETLSITNLLSLETISFIAKLENLKNLSLDCCPKIKTIFPEMPASLPVLNLKHCENLEKVVVGVEVSTHTNLDLKVENCPKFGDYVMVDHSDVPPPHEC.

49-56 (GEAGIGKT) is an ATP binding site. Residues 122–183 (GERDEDEEEE…KLEAEKKLVD (62 aa)) adopt a coiled-coil conformation. 4 stretches are compositionally biased toward basic and acidic residues: residues 171–205 (AAEK…KEKT), 212–224 (GEDK…ERKP), 263–279 (RRQE…HAEG), and 286–322 (SGEK…HEKV). Disordered regions lie at residues 171 to 225 (AAEK…RKPY) and 263 to 327 (RRQE…PPTI). Residue Thr293 is modified to Phosphothreonine. LRR repeat units lie at residues 654 to 676 (LLRV…KALT), 677 to 699 (KLNT…FFES), 702 to 724 (ELRS…SGLK), 725 to 747 (ELHC…QELV), 785 to 806 (KLQH…QDSA), 813 to 835 (SLTR…KPLS), 836 to 856 (GLQI…EVCF), 861 to 883 (ELKT…EDLS), 884 to 906 (SLNE…EKLE), 907 to 929 (NLEV…FEKM), and 931 to 951 (YLRV…PADT).

The protein belongs to the disease resistance NB-LRR family.

Functionally, probable disease resistance protein. This Arabidopsis thaliana (Mouse-ear cress) protein is Probable disease resistance protein At5g45510.